Consider the following 87-residue polypeptide: Protein Isd11 (87 aa).

It belongs to the complex I LYR family. In terms of assembly, interacts with IscS; the interaction enhances cysteine desulfurase activity of IscS. Component of a complex, at least composed of IscS, Isd11 and IscU.

The protein resides in the mitochondrion. It participates in cofactor biosynthesis; iron-sulfur cluster biosynthesis. In terms of biological role, participates in iron-sulfur cluster formation (ISC) pathway for iron-sulfur (Fe-S) cluster biogenesis. Enhances cysteine desulfurase activity of IscS. The polypeptide is Protein Isd11 (Plasmodium falciparum (isolate 3D7)).